A 398-amino-acid chain; its full sequence is ORC1-type DNA replication protein 1 (398 aa).

ATP contacts are provided by residues 67 to 71 (TGKTA), Tyr208, and Arg220.

The protein belongs to the CDC6/cdc18 family.

Involved in regulation of DNA replication. The polypeptide is ORC1-type DNA replication protein 1 (cdc6-1) (Sulfurisphaera tokodaii (strain DSM 16993 / JCM 10545 / NBRC 100140 / 7) (Sulfolobus tokodaii)).